We begin with the raw amino-acid sequence, 131 residues long: Small ribosomal subunit protein uS8 (131 aa).

It belongs to the universal ribosomal protein uS8 family. In terms of assembly, part of the 30S ribosomal subunit. Contacts proteins S5 and S12.

Functionally, one of the primary rRNA binding proteins, it binds directly to 16S rRNA central domain where it helps coordinate assembly of the platform of the 30S subunit. The sequence is that of Small ribosomal subunit protein uS8 from Legionella pneumophila (strain Paris).